We begin with the raw amino-acid sequence, 568 residues long: Putative ABC transporter ATP-binding protein CPE1583 (568 aa).

ABC transporter domains follow at residues 7 to 248 and 303 to 536; these read IEFK…GIRE and LEFK…ASLK. ATP contacts are provided by residues 41 to 48 and 336 to 343; these read GPSGSGKS and GKNGAGKS.

Belongs to the ABC transporter superfamily.

The protein resides in the cell membrane. Functionally, probably part of an ABC transporter complex. Responsible for energy coupling to the transport system. This chain is Putative ABC transporter ATP-binding protein CPE1583, found in Clostridium perfringens (strain 13 / Type A).